Reading from the N-terminus, the 400-residue chain is Phosphoglycerate kinase (400 aa).

Substrate contacts are provided by residues 21-23 (DFN), Arg37, 60-63 (HFGR), Arg119, and Arg152. Residues Lys205, Gly296, Glu327, and 353 to 356 (GGDT) contribute to the ATP site.

Belongs to the phosphoglycerate kinase family. Monomer.

It is found in the cytoplasm. It carries out the reaction (2R)-3-phosphoglycerate + ATP = (2R)-3-phospho-glyceroyl phosphate + ADP. It functions in the pathway carbohydrate degradation; glycolysis; pyruvate from D-glyceraldehyde 3-phosphate: step 2/5. The protein is Phosphoglycerate kinase of Aliarcobacter butzleri (strain RM4018) (Arcobacter butzleri).